A 179-amino-acid polypeptide reads, in one-letter code: Large ribosomal subunit protein uL5 (179 aa).

The protein belongs to the universal ribosomal protein uL5 family. As to quaternary structure, part of the 50S ribosomal subunit; part of the 5S rRNA/L5/L18/L25 subcomplex. Contacts the 5S rRNA and the P site tRNA. Forms a bridge to the 30S subunit in the 70S ribosome.

Functionally, this is one of the proteins that bind and probably mediate the attachment of the 5S RNA into the large ribosomal subunit, where it forms part of the central protuberance. In the 70S ribosome it contacts protein S13 of the 30S subunit (bridge B1b), connecting the 2 subunits; this bridge is implicated in subunit movement. Contacts the P site tRNA; the 5S rRNA and some of its associated proteins might help stabilize positioning of ribosome-bound tRNAs. In Pseudomonas entomophila (strain L48), this protein is Large ribosomal subunit protein uL5.